The sequence spans 32 residues: Conotoxin sr7a (32 aa).

3 disulfide bridges follow: cysteine 1–cysteine 17, cysteine 8–cysteine 21, and cysteine 16–cysteine 31. Position 32 is a serine amide (serine 32).

In terms of tissue distribution, expressed by the venom duct.

The protein localises to the secreted. Elicits hyperactivity when injected intracranially into mice and produces paralysis when injected into the pedal muscle of freshwater snails, Pomacea paludosa, but it has no apparent effect after intramuscular injection into the limpet Patella opea or the freshwater fish Lebistes reticulatus. The polypeptide is Conotoxin sr7a (Conus spurius (Alphabet cone)).